The following is a 217-amino-acid chain: ATP phosphoribosyltransferase (217 aa).

This sequence belongs to the ATP phosphoribosyltransferase family. Short subfamily. As to quaternary structure, heteromultimer composed of HisG and HisZ subunits.

Its subcellular location is the cytoplasm. It catalyses the reaction 1-(5-phospho-beta-D-ribosyl)-ATP + diphosphate = 5-phospho-alpha-D-ribose 1-diphosphate + ATP. The protein operates within amino-acid biosynthesis; L-histidine biosynthesis; L-histidine from 5-phospho-alpha-D-ribose 1-diphosphate: step 1/9. Catalyzes the condensation of ATP and 5-phosphoribose 1-diphosphate to form N'-(5'-phosphoribosyl)-ATP (PR-ATP). Has a crucial role in the pathway because the rate of histidine biosynthesis seems to be controlled primarily by regulation of HisG enzymatic activity. In Burkholderia ambifaria (strain MC40-6), this protein is ATP phosphoribosyltransferase.